The following is a 4168-amino-acid chain: MEPEDLPWPGELEEEEEEEEEEEEEEEEAAAAAAANVDDVVVVEEVEEEAGRELDSDSHYGPQHLESIDDEEDEEAKAWLQAHPGRILPPLSPPQHRYSEGERTSLEKIVPLTCHVWQQIVYQGNSRTQISDTNVVCLETTAQRGSGDDQKTESWHCLPQEMDSSQTLDTSQTRFNVRTEDTEVTDFPSLEEGILTQSENQVKEPNRDLFCSPLLVIQDSFASPDLPLLTCLTQDQEFAPDSLFHQSELSFAPLRGIPDKSEDTEWSSRPSEVSEALFQATAEVASDLASSRFSVSQHPLIGSTAVGSQCPFLPSEQGNNEETISSVDELKIPKDCDRYDDLCSYMSWKTRKDTQWPENNLADKDQVSVATSFDITDENIATKRSDHFDAARSYGQYWTQEDSSKQAETYLTKGLQGKVESDVITLDGLNENAVVCSERVAELQRKPTRESEYHSSDLRMLRMSPDTVPKAPKHLKAGDTSKGGIAKVTQSNLKSGITTTPVDSDIGSHLSLSLEDLSQLAVSSPLETTTGQHTDTLNQKTLADTHLTEETLKVTAIPEPADQKTATPTVLSSSHSHRGKPSIFYQQGLPDSHLTEEALKVSAAPGLADQTTGMSTLTSTSYSHREKPGTFYQQELPESNLTEEPLEVSAAPGPVEQKTGIPTVSSTSHSHVEDLLFFYRQTLPDGHLTDQALKVSAVSGPADQKTGTATVLSTPHSHREKPGIFYQQEFADSHQTEETLTKVSATPGPADQKTEIPAVQSSSYSQREKPSILYPQDLADSHLPEEGLKVSAVAGPADQKTGLPTVPSSAYSHREKLLVFYQQALLDSHLPEEALKVSAVSGPADGKTGTPAVTSTSSASSSLGEKPSAFYQQTLPNSHLTEEALKVSIVPGPGDQKTGIPSAPSSFYSHREKPIIFSQQTLPDFLFPEEALKVSAVSVLAAQKTGTPTVSSNSHSHSEKSSVFYQQELPDSDLPRESLKMSAIPGLTDQKTVPTPTVPSGSFSHREKPSIFYQQEWPDSYATEKALKVSTGPGPADQKTEIPAVQSSSYPQREKPSVLYPQVLSDSHLPEESLKVSAFPGPADQMTDTPAVPSTFYSQREKPGIFYQQTLPESHLPKEALKISVAPGLADQKTGTPTVTSTSYSQHREKPSIFHQQALPGTHIPEEAQKVSAVTGPGNQKTWIPRVLSTFYSQREKPGIFYQQTLPGSHIPEEAQKVSPVLGPADQKTGTPTPTSASYSHTEKPGIFYQQVLPDNHPTEEALKISVASEPVDQTTGTPAVTSTSYSQYREKPSIFYQQSLPSSHLTEEAKNVSAVPGPADQKTVIPILPSTFYSHTEKPGVFYQQVLPHSHPTEEALKISVASEPVDQTTGTPTVTSTSYSQHTEKPSIFYQQSLPGSHLTEEAKNVSAVPGPGDRKTGIPTLPSTFYSHTEKPGSFYQQVLPHSHLPEEALEVSVAPGPVDQTIGTPTVTSPSSSFGEKPIVIYKQAFPEGHLPEESLKVSVAPGPVGQTTGAPTITSPSYSQHRAKSGSFYQLALLGSQIPEEALRVSSAPGPADQTTGIPTITSTSYSFGEKPIVNYKQAFPDGHLPEEALKVSIVSGPTEKKTDIPAGPLGSSALGEKPITFYRQALLDSPLNKEVVKVSAAPGPADQKTETLPVHSTSYSNRGKPVIFYQQTLSDSHLPEEALKVPPVPGPDAQKTETPSVSSSLYSYREKPIVFYQQALPDSELTQEALKVSAVPQPADQKTGLSTVTSSFYSHTEKPNISYQQELPDSHLTEEALKVSNVPGPADQKTGVSTVTSTSYSHREKPIVSYQRELPHFTEAGLKILRVPGPADQKTGINILPSNSYPQREHSVISYEQELPDLTEVTLKAIGVPGPADQKTGIQIASSSSYSNREKASIFHQQELPDVTEEALNVFVVPGQGDRKTEIPTVPLSYYSRREKPSVISQQELPDSHLTEEALKVSPVSIPAEQKTGIPIGLSSSYSHSHKEKLKISTVHIPDDQKTEFPAATLSSYSQIEKPKISTVIGPNDQKTPSQTAFHSSYSQTVKPNILFQQQLPDRDQSKGILKISAVPELTDVNTGKPVSLSSSYFHREKSNIFSPQELPGSHVTEDVLKVSTIPGPAGQKTVLPTALPSSFSHREKPDIFYQKDLPDRHLTEDALKISSALGQADQITGLQTVPSGTYSHGENHKLVSEHVQRLIDNLNSSDSSVSSNNVLLNSQADDRVVINKPESAGFRDVGSEEIQDAENSAKTLKEIRTLLMEAENMALKRCNFPAPLARFRDISDISFIQSKKVVCFKEPSSTGVSNGDLLHRQPFTEESPSSRCIQKDIGTQTNLKCRRGIENWEFISSTTVRSPLQEAESKVSMALEETLRQYQAAKSVMRSEPEGCSGTIGNKIIIPMMTVIKSDSSSDASDGNGSCSWDSNLPESLESVSDVLLNFFPYVSPKTSITDSREEEGVSESEDGGGSSVDSLAAHVKNLLQCESSLNHAKEILRNAEEEESRVRAHAWNMKFNLAHDCGYSISELNEDDRRKVEEIKAELFGHGRTTDLSKGLQSPRGMGCKPEAVCSHIIIESHEKGCFRTLTSEHPQLDRHPCAFRSAGPSEMTRGRQNPSSCRAKHVNLSASLDQNNSHFKVWNSLQLKSHSPFQNFIPDEFKISKGLRMPFDEKMDPWLSELVEPAFVPPKEVDFHSSSQMPSPEPMKKFTTSITFSSHRHSKCISNSSVVKVGVTEGSQCTGASVGVFNSHFTEEQNPPRDLKQKTSSPSSFKMHSNSQDKEVTILAEGRRQSQKLPVDFERSFQEEKPLERSDFTGSHSEPSTRANCSNFKEIQISDNHTLISMGRPSSTLGVNRSSSRLGVKEKNVTITPDLPSCIFLEQRELFEQSKAPRADDHVRKHHSPSPQHQDYVAPDLPSCIFLEQRELFEQCKAPYVDHQMRENHSPLPQGQDSIASDLPSPISLEQCQSKAPGVDDQMNKHHFPLPQGQDCVVEKNNQHKPKSHISNINVEAKFNTVVSQSAPNHCTLAASASTPPSNRKALSCVHITLCPKTSSKLDSGTLDERFHSLDAASKARMNSEFNFDLHTVSSRSLEPTSKLLTSKPVAQDQESLGFLGPKSSLDFQVVQPSLPDSNTITQDLKTIPSQNSQIVTSRQIQVNISDFEGHSNPEGTPVFADRLPEKMKTPLSAFSEKLSSDAVTQITTESPEKTLFSSEIFINAEDRGHEIIEPGNQKLRKAPVKFASSSSVQQVTFSRGTDGQPLLLPYKPSGSTKMYYVPQLRQIPPSPDSKSDTTVESSHSGSNDAIAPDFPAQVLGTRDDDLSATVNIKHKEGIYSKRVVTKASLPVGEKPLQNENADASVQVLITGDENLSDKKQQEIHSTRAVTEAAQAKEKESLQKDTADSSAAAAAEHSAQVGDPEMKNLPDTKAITQKEEIHRKKTVPEEAWPNNKESLQINIEESECHSEFENTTRSVFRSAKFYIHHPVHLPSDQDICHESLGKSVFMRHSWKDFFQHHPDKHREHMCLPLPYQNMDKTKTDYTRIKSLSINVNLGNKEVMDTTKSQVRDYPKHNGQISDPQRDQKVTPEQTTQHTVSLNELWNKYRERQRQQRQPELGDRKELSLVDRLDRLAKILQNPITHSLQVSESTHDDSRGERSVKEWSGRQQQRNKLQKKKRFKSLEKSHKNTGELKKSKVLSHHRAGRSNQIKIEQIKFDKYILSKQPGFNYISNTSSDCRPSEESELLTDTTTNILSGTTSTVESDILTQTDREVALHERSSSVSTIDTARLIQAFGHERVCLSPRRIKLYSSITNQQRRYLEKRSKHSKKVLNTGHPLVTSEHTRRRHIQVANHVISSDSISSSASSFLSSNSTFCNKQNVHMLNKGIQAGNLEIVNGAKKHTRDVGITFPTPSSSEAKLEENSDVTSWSEEKREEKMLFTGYPEDRKLKKNKKNSHEGVSWFVPVENVESRSKKENVPNTCGPGISWFEPITKTRPWREPLREQNCQGQHLDGRGYLAGPGREAGRDLLRPFVRATLQESLQFHRPDFISRSGERIKRLKLIVQERKLQSMLQTERDALFNIDRERQGHQNRMCPLPKRVFLAIQKNKPISKKEMIQRSKRIYEQLPEVQKKREEEKRKSEYKSYRLRAQLYKKRVTNQLLGRKVPWD.

A compositionally biased stretch (acidic residues) spans 1 to 29 (MEPEDLPWPGELEEEEEEEEEEEEEEEEA). The tract at residues 1 to 69 (MEPEDLPWPG…YGPQHLESID (69 aa)) is disordered. Residues 30 to 40 (AAAAAANVDDV) are compositionally biased toward low complexity. Positions 49 to 58 (EAGRELDSDS) are enriched in basic and acidic residues. S464 carries the phosphoserine modification. 34 repeat units span residues 539 to 585 (QKTL…SIFY), 586 to 632 (QQGL…GTFY), 633 to 679 (QQEL…LFFY), 680 to 726 (RQTL…GIFY), 727 to 774 (QQEF…SILY), 775 to 821 (PQDL…LVFY), 822 to 871 (QQAL…SAFY), 872 to 918 (QQTL…IIFS), 919 to 965 (QQTL…SVFY), 966 to 1013 (QQEL…SIFY), 1014 to 1060 (QQEW…SVLY), 1061 to 1107 (PQVL…GIFY), 1108 to 1155 (QQTL…SIFH), 1156 to 1202 (QQAL…GIFY), 1203 to 1249 (QQTL…GIFY), 1250 to 1297 (QQVL…SIFY), 1298 to 1344 (QQSL…GVFY), 1345 to 1392 (QQVL…SIFY), 1393 to 1439 (QQSL…GSFY), 1440 to 1486 (QQVL…IVIY), 1487 to 1534 (KQAF…GSFY), 1535 to 1581 (QLAL…IVNY), 1582 to 1628 (KQAF…ITFY), 1629 to 1675 (RQAL…VIFY), 1676 to 1722 (QQTL…IVFY), 1723 to 1769 (QQAL…NISY), 1770 to 1816 (QQEL…IVSY), 1817 to 1861 (QREL…VISY), 1862 to 1906 (EQEL…SIFH), 1907 to 1951 (QQEL…SVIS), 1952 to 1999 (QQEL…LKIS), 2060 to 2105 (QQLP…NIFS), 2106 to 2152 (PQEL…DIFY), and 2153 to 2200 (QKDL…LVSE). A 34 X 47 AA approximate tandem repeat region spans residues 539–2200 (QKTLADTHLT…HGENHKLVSE (1662 aa)). Disordered regions lie at residues 558 to 579 (PEPADQKTATPTVLSSSHSHRG) and 606 to 625 (GLADQTTGMSTLTSTSYSHR). 2 stretches are compositionally biased toward polar residues: residues 564–574 (KTATPTVLSSS) and 609–622 (DQTTGMSTLTSTSY). 2 disordered regions span residues 699 to 718 (SGPADQKTGTATVLSTPHSH) and 735 to 769 (QTEETLTKVSATPGPADQKTEIPAVQSSSYSQREK). The segment covering 705-715 (KTGTATVLSTP) has biased composition (polar residues). The segment at 841–865 (SGPADGKTGTPAVTSTSSASSSLGE) is disordered. Disordered regions lie at residues 946 to 969 (GTPTVSSNSHSHSEKSSVFYQQEL), 983 to 1007 (AIPGLTDQKTVPTPTVPSGSFSHRE), and 1027 to 1055 (LKVSTGPGPADQKTEIPAVQSSSYPQREK). Residues 989-1003 (DQKTVPTPTVPSGSF) are compositionally biased toward polar residues. Residue S1189 is modified to Phosphoserine. Residues 1221–1241 (VLGPADQKTGTPTPTSASYSH) are disordered. The segment covering 1228-1240 (KTGTPTPTSASYS) has biased composition (polar residues). Residues 1786 to 1806 (SNVPGPADQKTGVSTVTSTSY) form a disordered region. The span at 1796 to 1806 (TGVSTVTSTSY) shows a compositional bias: low complexity. Position 2143 is a phosphoserine (S2143). Disordered regions lie at residues 2456 to 2477 (ITDSREEEGVSESEDGGGSSVD) and 2600 to 2621 (HPCAFRSAGPSEMTRGRQNPSS). A Phosphoserine modification is found at S2466. A Phosphoserine modification is found at S2632. Disordered stretches follow at residues 2753–2828 (HFTE…STRA), 2892–2912 (KAPRADDHVRKHHSPSPQHQD), 3283–3310 (RQIPPSPDSKSDTTVESSHSGSNDAIAP), 3389–3426 (EAAQAKEKESLQKDTADSSAAAAAEHSAQVGDPEMKNL), 3566–3594 (QVRDYPKHNGQISDPQRDQKVTPEQTTQH), and 3643–3704 (SLQV…HRAG). A compositionally biased stretch (basic and acidic residues) spans 2754 to 2766 (FTEEQNPPRDLKQ). Positions 2767–2779 (KTSSPSSFKMHSN) are enriched in polar residues. 2 stretches are compositionally biased toward basic and acidic residues: residues 2780 to 2793 (SQDKEVTILAEGRR) and 2800 to 2816 (VDFERSFQEEKPLERSD). Residue S2805 is modified to Phosphoserine. Over residues 2817-2828 (FTGSHSEPSTRA) the composition is skewed to polar residues. Residues 3294–3305 (DTTVESSHSGSN) are compositionally biased toward polar residues. Positions 3392–3404 (QAKEKESLQKDTA) are enriched in basic and acidic residues. The span at 3405–3416 (DSSAAAAAEHSA) shows a compositional bias: low complexity. 2 stretches are compositionally biased toward basic and acidic residues: residues 3649–3664 (STHDDSRGERSVKEWS) and 3680–3694 (KSLEKSHKNTGELKK). Residues 3695–3704 (SKVLSHHRAG) are compositionally biased toward basic residues. The interval 4036-4167 (TLQESLQFHR…NQLLGRKVPW (132 aa)) is ALMS motif.

The protein belongs to the ALMS1 family. In terms of tissue distribution, expressed in all tissues tested including adipose and pancreas. Expressed by beta-cells of the islets in the pancreas (at protein level).

It localises to the cytoplasm. The protein resides in the cytoskeleton. The protein localises to the microtubule organizing center. Its subcellular location is the centrosome. It is found in the cilium basal body. It localises to the spindle pole. Its function is as follows. Involved in PCM1-dependent intracellular transport. Required, directly or indirectly, for the localization of NCAPD2 to the proximal ends of centrioles. Required for proper formation and/or maintenance of primary cilia (PC), microtubule-based structures that protrude from the surface of epithelial cells. The protein is Centrosome-associated protein ALMS1 (ALMS1) of Homo sapiens (Human).